Reading from the N-terminus, the 213-residue chain is N-(5'-phosphoribosyl)anthranilate isomerase (213 aa).

The protein belongs to the TrpF family.

It catalyses the reaction N-(5-phospho-beta-D-ribosyl)anthranilate = 1-(2-carboxyphenylamino)-1-deoxy-D-ribulose 5-phosphate. It participates in amino-acid biosynthesis; L-tryptophan biosynthesis; L-tryptophan from chorismate: step 3/5. The chain is N-(5'-phosphoribosyl)anthranilate isomerase from Rhodopseudomonas palustris (strain TIE-1).